Reading from the N-terminus, the 551-residue chain is Cytochrome c oxidase subunit 1 homolog (551 aa).

3 helical membrane-spanning segments follow: residues 14–34 (GELG…VVAA), 40–60 (EYAF…FVIG), and 88–108 (VGTL…VIIA). H132 serves as a coordination point for heme b. 8 consecutive transmembrane segments (helical) span residues 133–153 (TSAV…FYVV), 169–189 (FVVL…LLGI), 202–222 (ADLW…GTVL), 229–249 (IYVA…LHLG), 280–300 (GHNA…YYFI), 313–333 (LSIV…PHHL), 345–365 (LGMT…INGL), and 383–403 (MMVV…MMSV). H281, H331, and H332 together coordinate Cu cation. H419 and H421 together coordinate heme b. 3 consecutive transmembrane segments (helical) span residues 424–444 (ALGW…PWLW), 459–479 (FWVS…AGIL), and 513–533 (IGGI…FMTI).

Belongs to the heme-copper respiratory oxidase family. Cu(2+) is required as a cofactor. Requires heme b as cofactor.

It localises to the cell membrane. The enzyme catalyses 4 Fe(II)-[cytochrome c] + O2 + 8 H(+)(in) = 4 Fe(III)-[cytochrome c] + 2 H2O + 4 H(+)(out). Its pathway is energy metabolism; oxidative phosphorylation. In terms of biological role, cytochrome c oxidase is the component of the respiratory chain that catalyzes the reduction of oxygen to water. Subunits 1-3 form the functional core of the enzyme complex. Co I is the catalytic subunit of the enzyme. Electrons originating in cytochrome c or a quinol are transferred to the bimetallic center formed by a high-spin heme and copper B. The chain is Cytochrome c oxidase subunit 1 homolog (fixN) from Azorhizobium caulinodans (strain ATCC 43989 / DSM 5975 / JCM 20966 / LMG 6465 / NBRC 14845 / NCIMB 13405 / ORS 571).